The sequence spans 188 residues: Ribosome-recycling factor (188 aa).

The protein belongs to the RRF family.

It is found in the cytoplasm. Responsible for the release of ribosomes from messenger RNA at the termination of protein biosynthesis. May increase the efficiency of translation by recycling ribosomes from one round of translation to another. The sequence is that of Ribosome-recycling factor from Anaeromyxobacter dehalogenans (strain 2CP-1 / ATCC BAA-258).